A 427-amino-acid chain; its full sequence is Enolase (427 aa).

Residue glutamine 163 participates in (2R)-2-phosphoglycerate binding. The active-site Proton donor is glutamate 205. Residues aspartate 242, glutamate 285, and aspartate 312 each contribute to the Mg(2+) site. Positions 337, 366, 367, and 388 each coordinate (2R)-2-phosphoglycerate. Lysine 337 (proton acceptor) is an active-site residue.

Belongs to the enolase family. Requires Mg(2+) as cofactor.

It is found in the cytoplasm. The protein localises to the secreted. Its subcellular location is the cell surface. It catalyses the reaction (2R)-2-phosphoglycerate = phosphoenolpyruvate + H2O. Its pathway is carbohydrate degradation; glycolysis; pyruvate from D-glyceraldehyde 3-phosphate: step 4/5. In terms of biological role, catalyzes the reversible conversion of 2-phosphoglycerate (2-PG) into phosphoenolpyruvate (PEP). It is essential for the degradation of carbohydrates via glycolysis. The sequence is that of Enolase from Rhodopseudomonas palustris (strain ATCC BAA-98 / CGA009).